A 202-amino-acid polypeptide reads, in one-letter code: Protein EMBRYO DEFECTIVE 514 (202 aa).

2 disordered regions span residues 1–69 and 168–202; these read MAEE…PVKL and MKTP…RFRR. Ala2 bears the N-acetylalanine mark. Basic and acidic residues-rich tracts occupy residues 33–42 and 51–65; these read ETGDEKRERE and GESK…EKSG. Positions 174 to 202 are enriched in gly residues; that stretch reads NGNGHGGGRGGGGGRRGGRGGGRGGRFRR.

In terms of tissue distribution, expressed in leaves, flowers and embryos at globular stage.

The protein localises to the nucleus. Functionally, may play a role in ribosome biogenesis and in determining the rate of cell division. Involved in a process essential for nuclear and nucleolar functions. This chain is Protein EMBRYO DEFECTIVE 514, found in Arabidopsis thaliana (Mouse-ear cress).